The primary structure comprises 130 residues: Serum amyloid A protein (130 aa).

The signal sequence occupies residues 1–18 (MKLFTGLILCSLVLGVHS). Gln19 is modified (pyrrolidone carboxylic acid). Residues 86-130 (TDPLFKGTTSGQGQEDSRADQAANEWGRSGKDPNHFRPAGLPDKY) form a disordered region.

Belongs to the SAA family. In terms of processing, this protein is the precursor of amyloid protein A, which is formed by the removal of residues from the C-terminal end. Expressed by the liver; secreted in plasma.

The protein resides in the secreted. Major acute phase reactant. Apolipoprotein of the HDL complex. The protein is Serum amyloid A protein (SAA1) of Bos taurus (Bovine).